Reading from the N-terminus, the 937-residue chain is Coiled-coil domain-containing protein 39 (937 aa).

Coiled coils occupy residues 16–137 (AIPV…CQMN), 165–339 (QQDD…KKDI), 365–615 (EKTL…SQIR), and 664–816 (VIKA…LKQT). The segment at 866–937 (LPTARGPSSR…NIPKEKKLSK (72 aa)) is disordered. Low complexity predominate over residues 873–887 (SSRSSSQSSSLSSFR). Serine 888 and serine 896 each carry phosphoserine. Residues 915-928 (NDSSRSASSGSNSN) show a composition bias toward low complexity.

This sequence belongs to the CCDC39 family. Strongly expressed in tissues rich in ciliated cells. Expressed in olfactory and vomeronasal sensory neurons and the respiratory epithelium. Expressed in node cells carrying motile cilia, in upper and lower airways, and in ependymal and choroid plexus cells.

The protein resides in the cytoplasm. Its subcellular location is the cytoskeleton. It localises to the cilium axoneme. In terms of biological role, required for assembly of dynein regulatory complex (DRC) and inner dynein arm (IDA) complexes, which are responsible for ciliary beat regulation, thereby playing a central role in motility in cilia and flagella. Probably acts together with CCDC40 to form a molecular ruler that determines the 96 nanometer (nm) repeat length and arrangements of components in cilia and flagella. Not required for outer dynein arm complexes assembly. This Mus musculus (Mouse) protein is Coiled-coil domain-containing protein 39.